The sequence spans 194 residues: Granulocyte colony-stimulating factor (194 aa).

Residues 1-20 (KLMALQLLLWHSALWMVQEA) form the signal peptide. 2 disulfide bridges follow: Cys56–Cys62 and Cys84–Cys94. O-linked (GalNAc...) threonine glycosylation occurs at Thr153.

It belongs to the IL-6 superfamily. In terms of assembly, monomer. In terms of processing, O-glycosylated.

It localises to the secreted. Functionally, granulocyte/macrophage colony-stimulating factors are cytokines that act in hematopoiesis by controlling the production, differentiation, and function of 2 related white cell populations of the blood, the granulocytes and the monocytes-macrophages. This CSF induces granulocytes. The chain is Granulocyte colony-stimulating factor (CSF3) from Felis catus (Cat).